The primary structure comprises 160 residues: 2-C-methyl-D-erythritol 2,4-cyclodiphosphate synthase (160 aa).

2 residues coordinate a divalent metal cation: Asp10 and His12. 4-CDP-2-C-methyl-D-erythritol 2-phosphate is bound by residues 10–12 (DVH) and 36–37 (HS). His44 provides a ligand contact to a divalent metal cation. Residues 58–60 (DIG), 63–67 (FPDTD), 102–108 (AQAPKML), 134–137 (TTTE), Phe141, and Arg144 each bind 4-CDP-2-C-methyl-D-erythritol 2-phosphate.

Belongs to the IspF family. In terms of assembly, homotrimer. A divalent metal cation is required as a cofactor.

The enzyme catalyses 4-CDP-2-C-methyl-D-erythritol 2-phosphate = 2-C-methyl-D-erythritol 2,4-cyclic diphosphate + CMP. The protein operates within isoprenoid biosynthesis; isopentenyl diphosphate biosynthesis via DXP pathway; isopentenyl diphosphate from 1-deoxy-D-xylulose 5-phosphate: step 4/6. Functionally, involved in the biosynthesis of isopentenyl diphosphate (IPP) and dimethylallyl diphosphate (DMAPP), two major building blocks of isoprenoid compounds. Catalyzes the conversion of 4-diphosphocytidyl-2-C-methyl-D-erythritol 2-phosphate (CDP-ME2P) to 2-C-methyl-D-erythritol 2,4-cyclodiphosphate (ME-CPP) with a corresponding release of cytidine 5-monophosphate (CMP). This Shewanella amazonensis (strain ATCC BAA-1098 / SB2B) protein is 2-C-methyl-D-erythritol 2,4-cyclodiphosphate synthase.